The following is a 136-amino-acid chain: Large ribosomal subunit protein eL27B (136 aa).

The protein belongs to the eukaryotic ribosomal protein eL27 family. In terms of assembly, component of the large ribosomal subunit (LSU). Mature yeast ribosomes consist of a small (40S) and a large (60S) subunit. The 40S small subunit contains 1 molecule of ribosomal RNA (18S rRNA) and 33 different proteins (encoded by 57 genes). The large 60S subunit contains 3 rRNA molecules (25S, 5.8S and 5S rRNA) and 46 different proteins (encoded by 81 genes).

It localises to the cytoplasm. Component of the ribosome, a large ribonucleoprotein complex responsible for the synthesis of proteins in the cell. The small ribosomal subunit (SSU) binds messenger RNAs (mRNAs) and translates the encoded message by selecting cognate aminoacyl-transfer RNA (tRNA) molecules. The large subunit (LSU) contains the ribosomal catalytic site termed the peptidyl transferase center (PTC), which catalyzes the formation of peptide bonds, thereby polymerizing the amino acids delivered by tRNAs into a polypeptide chain. The nascent polypeptides leave the ribosome through a tunnel in the LSU and interact with protein factors that function in enzymatic processing, targeting, and the membrane insertion of nascent chains at the exit of the ribosomal tunnel. The protein is Large ribosomal subunit protein eL27B of Saccharomyces cerevisiae (strain ATCC 204508 / S288c) (Baker's yeast).